A 467-amino-acid polypeptide reads, in one-letter code: Probable citrate synthase 1, mitochondrial (467 aa).

Catalysis depends on residues His-303, His-349, and Asp-404.

The protein belongs to the citrate synthase family. As to quaternary structure, homodimer.

The protein localises to the mitochondrion matrix. The catalysed reaction is oxaloacetate + acetyl-CoA + H2O = citrate + CoA + H(+). Its pathway is carbohydrate metabolism; tricarboxylic acid cycle; isocitrate from oxaloacetate: step 1/2. The protein is Probable citrate synthase 1, mitochondrial of Aedes aegypti (Yellowfever mosquito).